We begin with the raw amino-acid sequence, 544 residues long: MADTPTSRMIHPFSNIPSQNLKQFQYSDNPQHPCHPYRAPSDTHVVPHHYGLKSHSPDAGYESQATPNKYTLDSSEGAGCMRHDSPSSQSFTTRSGSPLSQEDSHSDSTDGSPVGASCVTEDPNDLKQKLKDLEAVMLGPDSEIVNSLENSVANQLSLEPEKWVRMMGIPRGNLKELLIACARAVEEKNSFAIDMMIPELRKIVSVSGEPLERLGAYMVEGLVARLASSGISIYKALKCKEPKSSDLLSYMHFLYEACPYFKFGYMSANGAIAEAVKGEDRIHIIDFHISQGAQWISLLQALAARPGGPPTVRITGIDDSVSAYARGGGLELVGRRLSHIASLCKVPFEFHPLAISGSKVEAAHLGVIPGEALAVNFTLELHHIPDESVSTANHRDRLLRMVKSLSPKVLTLVEMESNTNTAPFPQRFAETLDYYTAIFESIDLTLPRDDRERINMEQHCLAREIVNLIACEGEERAERYEPFGKWKARLTMAGFRPSPLSSLVNATIRTLLQSYSDNYKLAERDGALYLGWKSRPLVVSSAWH.

Residues 1–123 (MADTPTSRMI…VGASCVTEDP (123 aa)) form a disordered region. Polar residues-rich tracts occupy residues 15–30 (NIPSQNLKQFQYSDNP), 63–74 (SQATPNKYTLDS), and 86–101 (PSSQSFTTRSGSPLSQ). A GRAS domain is found at 165–544 (RMMGIPRGNL…RPLVVSSAWH (380 aa)). Residues 172–232 (GNLKELLIAC…VARLASSGIS (61 aa)) form a leucine repeat I (LRI) region. Positions 251–316 (MHFLYEACPY…GGPPTVRITG (66 aa)) are VHIID. The VHIID motif lies at 282-286 (IHIID). A leucine repeat II (LRII) region spans residues 332–364 (LVGRRLSHIASLCKVPFEFHPLAISGSKVEAAH). A PFYRE region spans residues 373–467 (LAVNFTLELH…QHCLAREIVN (95 aa)). The tract at residues 470–544 (ACEGEERAER…RPLVVSSAWH (75 aa)) is SAW.

Belongs to the GRAS family.

Its subcellular location is the nucleus. In terms of biological role, may play a regulatory role in the early step of oligosaccharide elicitor response, downstream of the membrane-associated high-affinity chitin-binding protein. This Oryza sativa subsp. japonica (Rice) protein is Chitin-inducible gibberellin-responsive protein 2 (CIGR2).